A 452-amino-acid polypeptide reads, in one-letter code: Friend leukemia integration 1 transcription factor (452 aa).

A Phosphoserine modification is found at Ser39. A PNT domain is found at 112–198; that stretch reads PPPPNMTTNE…SHLTYLRESS (87 aa). Residues 202-214 are compositionally biased toward polar residues; it reads YNTTSHTDPSSRL. A disordered region spans residues 202 to 272; the sequence is YNTTSHTDPS…YQILGPTSSR (71 aa). Residues 215–226 show a composition bias toward basic and acidic residues; the sequence is NVKEDPSYDSVR. A compositionally biased stretch (polar residues) spans 248–257; sequence QTMSKNTEQR. A DNA-binding region (ETS) is located at residues 281-361; sequence IQLWQFLLEL…HGKRYAYKFD (81 aa).

This sequence belongs to the ETS family. As to quaternary structure, can form homodimers or heterodimers with ETV6/TEL1.

The protein localises to the nucleus. Functionally, sequence-specific transcriptional activator. Recognizes the DNA sequence 5'-C[CA]GGAAGT-3'. The chain is Friend leukemia integration 1 transcription factor (FLI1) from Bos taurus (Bovine).